Consider the following 2235-residue polypeptide: MPLFFSALLVLLLVALSALFLGRWLVVRLATKWCQRKLQAELKIGSFRFFWIQNVSLKFQQHQQTVEIDNLWISSKLLSHDLPHYVALCFGEVRIRTDLQKVSDLSAPFSQSAGVDQKELSFSPSLLKIFCQLFSIHVDAINIMVLKVDTSESLWHIQISRSRFLLDSDGKRLICEVSLCKINSKVLKSGQLEDTCLVELSLALDLCLKVGISSRHLTAITVDVWTLHAELHEGLFQSQLLCQGPSLASKPVPCSEVTENLVEPTLPGLFLLQQLPDQVKVKMENTSVVLSMNSQKRHLTWTLKLLQFLYHRDEDQLPLRSFTANSDMAQMSTELLLEDGLLLSQSRQRIVCLNSLKASVQVTTIDLSASLVLNTCIIHYRHQEFSHWLHLLALETQGSSSPVLKQRKKRTFPQILAPIIFSTSISNVNISIQLGDTPPFALGFNSISLDYQHLRPQSIHQRGVLTVDHLCWRVGSDSHIQRAPHPPNMHVWGEALVLDSFTLQGSYNQPLGLSSTQSDTLFLDCTIRGLQVEASDTCAQCLSRILSLMGPQSGKSAVSRHSSFGESVSLLWKVDLKVEDMNLFTLSALVGASEVRLDTLTILGSAETSTVGIQGLVLALVKSVTEKMQPCCKAPDIPTPVLSLSMLSITYHSSIRSLEVQCGAGLTLLWSPPDHMYLYQHVLATLQCRDLLRATVFPETVPSLALETSGTTSELEGRAPEPLPPKRLLNLTLEVSTAKLTAFVAEDKFITLAAESVSLSRHGGSLQAYCPELAAGFDGNSIFNFKEVEVQLLPELEEMILHRNPFPALQTLRNRVWLLSFGSVSVEFPYQYDFSRTLDEAVGVQKWLKGLHQGTRAWASPSPVPLPPDLLLKVEHFSWVFLDDVFEVKLHDNYELMKDESKESAKRLQLLDAKVAALRKQHGELLPARKIEELYASLERKNIEIYIQRSRRLYGNTPMRRALLTWSLAGLELVALADASFHGPEHVVEQVQELDPGSPFPPEGLDLVIQWCRMLKCNVKSFLVRIRDYPRYLFEIRDWRLMGRLVGTEQSGQPCSRRRQILHLGLPWGNVAVERNMPPLKFYHDFHSEIFQYTVVWGPCWDPAWTLIGQCVDLLTKPSADPSPPLPWWDKSRLLFHGDWHMDIEQANLHQLATEDPYNTTENMHWEWSHLSFHWKPGQFVFKGDLDINVRTASKYDDCCFLHLPDLCMTLDLQWLCHGNPHDHHSVTLRAPEFLPEVPLGQLHDSYRAFRSENLNLSIKMDLTRHSGTISQPRILLYSSTLRWMQNFWATWTSVTRPICRGKLFNNLKPSKKKLGQHYKQLSYTALFPQLQVHYWASFAQQRGIQIECSQGHVFTRGTQRLIPQAGTVMRRLISDWSVTQMVSDLSQVTVHLMASPTEENADHCLDPLVTKTHLLSLSSLTYQRHSNRTAEEELSARDGDPTFHTHQLHLVDLRISWTTTNRDIAFGLYDGYKKAAVLKRNLSTEALKGLKIDPQMPAKKPKRGVPTSASAPPRVNTPSFSGQPDKGSSGGAYMLQKLIEETDRFVVFTEEESGMSDQLCGIAACQTDDIYNRNCLIELVNCQMVLRGAETEGCVIVSAAKAQLLQCQHHPAWYGDTLKQKTSWTCLLDGMQYFATTESSPTEQDGRQLWLEVKNIEEHRQRSLDSVQELMESGQAVGGMVTTTTDWNQPAEAQQAQQVQRIISRCNCRMYYISYSHDIDPELATQIKPPEVLENQEKEDLLKKQEGAVDTFTLIHHELEISTNPAQYAMILDIVNNLLLHVEPKRKEHSEKKQRVRFQLEISSNPEEQRSSILHLQEAVRQHVAQIRQLEKQMYSIMKSLQDDSKNENLLDLNQKLQLQLNQEKANLQLESEELNILIRCFKDFQLQRANKMELRKQQEDVSVVRRTEFYFAQARWRLTEEDGQLGIAELELQRFLYSKVNKSDDTAEHLLELGWFTMNNLLPNAVYKVVLRPQSSCQSGRQLALRLFSKVRPPVGGISVKEHFEVNVVPLTIQLTHQFFHRMMGFFFPGRSVEDDEVGDEEDKSKLVTTGIPVVKPRQLIATDDAVPLGPGKGVAQGLTRSSGVRRSFRKSPEHPVDDIDKMKERAAMNNSFIYIKIPQVPLCVSYKGEKNSVDWGDLNLVLPCLEYHNNTWTWLDFAMAVKRDSRKALVAQVIKEKLRLKSATGSEVRGKLETKSDLNMQQQEEEEKARLLIGLSVGDKNPGKKSIFGRRK.

The signal sequence occupies residues 1–31 (MPLFFSALLVLLLVALSALFLGRWLVVRLAT). The tract at residues 29-108 (LATKWCQRKL…LQKVSDLSAP (80 aa)) is transmembrane domain. S563 carries the post-translational modification Phosphoserine. N-linked (GlcNAc...) asparagine glycosylation is present at N730. The interval 1495–1529 (PQMPAKKPKRGVPTSASAPPRVNTPSFSGQPDKGS) is disordered. Residues 1813–1885 (SILHLQEAVR…LNILIRCFKD (73 aa)) adopt a coiled-coil conformation. Phosphoserine occurs at positions 1846, 2090, and 2094. The disordered stretch occupies residues 2074–2099 (GKGVAQGLTRSSGVRRSFRKSPEHPV).

The protein belongs to the SABRE family. In terms of tissue distribution, expressed in pancreas, placenta and up-regulated in breast carcinoma epithelial cells, ductal in situ carcinoma (DCIS), invasive breast carcinoma (IBC) and metastatic breast carcinoma cells (MET).

The protein resides in the cell membrane. It localises to the endoplasmic reticulum membrane. Its subcellular location is the mitochondrion membrane. Its function is as follows. Tube-forming lipid transport protein which binds to phosphatidylinositols and affects phosphatidylinositol-4,5-bisphosphate (PtdIns-4,5-P2) distribution. The protein is Bridge-like lipid transfer protein family member 2 of Homo sapiens (Human).